We begin with the raw amino-acid sequence, 631 residues long: 1-deoxy-D-xylulose-5-phosphate synthase (631 aa).

Thiamine diphosphate is bound by residues H87 and 128–130 (GHS). D159 is a Mg(2+) binding site. Thiamine diphosphate contacts are provided by residues 160–161 (GA), N188, F295, and E377. Position 188 (N188) interacts with Mg(2+).

It belongs to the transketolase family. DXPS subfamily. As to quaternary structure, homodimer. Mg(2+) serves as cofactor. It depends on thiamine diphosphate as a cofactor.

It catalyses the reaction D-glyceraldehyde 3-phosphate + pyruvate + H(+) = 1-deoxy-D-xylulose 5-phosphate + CO2. It functions in the pathway metabolic intermediate biosynthesis; 1-deoxy-D-xylulose 5-phosphate biosynthesis; 1-deoxy-D-xylulose 5-phosphate from D-glyceraldehyde 3-phosphate and pyruvate: step 1/1. In terms of biological role, catalyzes the acyloin condensation reaction between C atoms 2 and 3 of pyruvate and glyceraldehyde 3-phosphate to yield 1-deoxy-D-xylulose-5-phosphate (DXP). This chain is 1-deoxy-D-xylulose-5-phosphate synthase, found in Pseudomonas putida (strain GB-1).